The sequence spans 208 residues: Probable acyl-homoserine-lactone synthase (208 aa).

Belongs to the autoinducer synthase family.

It catalyses the reaction a fatty acyl-[ACP] + S-adenosyl-L-methionine = an N-acyl-L-homoserine lactone + S-methyl-5'-thioadenosine + holo-[ACP] + H(+). Functionally, required for the synthesis of OHHL (N-(3-oxooctanoyl)-L-homoserine lactone), an autoinducer molecule which binds to TraR and thus acts in the control of conjugal transfer. This Sinorhizobium fredii (strain NBRC 101917 / NGR234) protein is Probable acyl-homoserine-lactone synthase (traI).